The sequence spans 308 residues: Ribonuclease Z (308 aa).

Zn(2+)-binding residues include His63, His65, Asp67, His68, His140, Asp211, and His269. The Proton acceptor role is filled by Asp67.

It belongs to the RNase Z family. Homodimer. Zn(2+) serves as cofactor.

The catalysed reaction is Endonucleolytic cleavage of RNA, removing extra 3' nucleotides from tRNA precursor, generating 3' termini of tRNAs. A 3'-hydroxy group is left at the tRNA terminus and a 5'-phosphoryl group is left at the trailer molecule.. Zinc phosphodiesterase, which displays some tRNA 3'-processing endonuclease activity. Probably involved in tRNA maturation, by removing a 3'-trailer from precursor tRNA. The sequence is that of Ribonuclease Z from Bacillus velezensis (strain DSM 23117 / BGSC 10A6 / LMG 26770 / FZB42) (Bacillus amyloliquefaciens subsp. plantarum).